Here is a 97-residue protein sequence, read N- to C-terminus: Integration host factor subunit alpha (97 aa).

Residues 49 to 71 are disordered; the sequence is FGNFDLRDKNQRPGRNPKTGEDI.

This sequence belongs to the bacterial histone-like protein family. As to quaternary structure, heterodimer of an alpha and a beta chain.

Functionally, this protein is one of the two subunits of integration host factor, a specific DNA-binding protein that functions in genetic recombination as well as in transcriptional and translational control. This is Integration host factor subunit alpha from Shewanella woodyi (strain ATCC 51908 / MS32).